A 222-amino-acid polypeptide reads, in one-letter code: Probable translocation protein y4yL (222 aa).

Helical transmembrane passes span 6-26 (PAIL…LAVV), 52-72 (PNIV…APVA), 158-178 (IGFL…TILM), and 182-202 (MSMV…FVAI).

Belongs to the FliP/MopC/SpaP family.

The protein resides in the cell membrane. Could be involved in the secretion of an unknown factor. The chain is Probable translocation protein y4yL from Sinorhizobium fredii (strain NBRC 101917 / NGR234).